An 809-amino-acid polypeptide reads, in one-letter code: Mediator of RNA polymerase II transcription subunit 15 (809 aa).

Disordered regions lie at residues 115 to 137, 183 to 211, and 413 to 549; these read AMQGVAGGQQGAGAAGPMQQMIQ, QLQQHHQNQQMQHQNQQQQQAQNQQQQNQ, and GQMM…ASQS. A compositionally biased stretch (gly residues) spans 119–128; sequence VAGGQQGAGA. The segment covering 446-467 has biased composition (low complexity); that stretch reads QQMPQAQQMMSSPSPVQVQTPQ. Positions 468–484 are enriched in pro residues; the sequence is SMPPPPQPQPSPQPPSS. Low complexity-rich tracts occupy residues 485-502 and 510-520; these read QPNSVSSGPTPSPGGFQP and QSPASSRTPQS. Over residues 533-549 the composition is skewed to polar residues; sequence TPGNPSSVMSPAGASQS.

Belongs to the Mediator complex subunit 15 family. As to quaternary structure, component of the Mediator complex. Interacts with srebf1 and srebf2. Interacts with smad2, smad3 and smad4.

Its subcellular location is the cytoplasm. The protein resides in the nucleus. In terms of biological role, component of the Mediator complex, a coactivator involved in the regulated transcription of nearly all RNA polymerase II-dependent genes. Mediator functions as a bridge to convey information from gene-specific regulatory proteins to the basal RNA polymerase II transcription machinery. Mediator is recruited to promoters by direct interactions with regulatory proteins and serves as a scaffold for the assembly of a functional preinitiation complex with RNA polymerase II and the general transcription factors. Required for cholesterol-dependent gene regulation. Positively regulates the Nodal signaling pathway. The sequence is that of Mediator of RNA polymerase II transcription subunit 15 (med15) from Danio rerio (Zebrafish).